Here is a 445-residue protein sequence, read N- to C-terminus: Cyclin-B1-2 (445 aa).

The protein belongs to the cyclin family. Cyclin AB subfamily. Interacts with FZR2/CCS52A1, FZR1/CCS52A2 and FZR3/CCS52B. As to expression, expressed in roots, stems and flowers.

Functionally, may induce mitotic cell division. In Arabidopsis thaliana (Mouse-ear cress), this protein is Cyclin-B1-2 (CYCB1-2).